The following is a 496-amino-acid chain: Probable fatty acyl-CoA reductase 5 (496 aa).

Belongs to the fatty acyl-CoA reductase family. Expressed in the endodermal cell layer surrounding the central vasculature in roots. Expressed in floral organs of very young unopened buds and receptacle of siliques.

The enzyme catalyses a long-chain fatty acyl-CoA + 2 NADPH + 2 H(+) = a long-chain primary fatty alcohol + 2 NADP(+) + CoA. In terms of biological role, catalyzes the reduction of fatty acyl-CoA to fatty alcohols. Catalyzes specifically the formation of C18:0 fatty alcohol. Provides the fatty alcohols required for synthesis of suberin in roots, seed coat and wound-induced leaf tissue. Provides the fatty alcohols required for synthesis of alkyl hydroxycinnamates in root waxes. This chain is Probable fatty acyl-CoA reductase 5, found in Arabidopsis thaliana (Mouse-ear cress).